Reading from the N-terminus, the 223-residue chain is RNA pyrophosphohydrolase (223 aa).

A Nudix hydrolase domain is found at G6 to T149. Positions G38–G59 match the Nudix box motif. Positions E175 to R223 are disordered. A compositionally biased stretch (low complexity) spans D180–G193.

The protein belongs to the Nudix hydrolase family. RppH subfamily. Requires a divalent metal cation as cofactor.

Functionally, accelerates the degradation of transcripts by removing pyrophosphate from the 5'-end of triphosphorylated RNA, leading to a more labile monophosphorylated state that can stimulate subsequent ribonuclease cleavage. The polypeptide is RNA pyrophosphohydrolase (Variovorax paradoxus (strain S110)).